Reading from the N-terminus, the 174-residue chain is ATP synthase subunit delta, sodium ion specific (174 aa).

Belongs to the ATPase delta chain family. In terms of assembly, F-type ATPases have 2 components, F(1) - the catalytic core - and F(0) - the membrane proton channel. F(1) has five subunits: alpha(3), beta(3), gamma(1), delta(1), epsilon(1). F(0) has three main subunits: a(1), b(2) and c(10-14). The alpha and beta chains form an alternating ring which encloses part of the gamma chain. F(1) is attached to F(0) by a central stalk formed by the gamma and epsilon chains, while a peripheral stalk is formed by the delta and b chains.

Its subcellular location is the cell inner membrane. F(1)F(0) ATP synthase produces ATP from ADP in the presence of a proton or sodium gradient. F-type ATPases consist of two structural domains, F(1) containing the extramembraneous catalytic core and F(0) containing the membrane proton channel, linked together by a central stalk and a peripheral stalk. During catalysis, ATP synthesis in the catalytic domain of F(1) is coupled via a rotary mechanism of the central stalk subunits to proton translocation. Functionally, this protein is part of the stalk that links CF(0) to CF(1). It either transmits conformational changes from CF(0) to CF(1) or is implicated in proton conduction. The polypeptide is ATP synthase subunit delta, sodium ion specific (Ilyobacter tartaricus).